The following is a 527-amino-acid chain: Peptide chain release factor 3 (527 aa).

Positions 9–277 constitute a tr-type G domain; sequence AKRRTFAIIS…AVVDWAPRPL (269 aa). Residues 18–25, 86–90, and 140–143 contribute to the GTP site; these read SHPDAGKT, DTPGH, and NKLD.

This sequence belongs to the TRAFAC class translation factor GTPase superfamily. Classic translation factor GTPase family. PrfC subfamily.

It localises to the cytoplasm. Increases the formation of ribosomal termination complexes and stimulates activities of RF-1 and RF-2. It binds guanine nucleotides and has strong preference for UGA stop codons. It may interact directly with the ribosome. The stimulation of RF-1 and RF-2 is significantly reduced by GTP and GDP, but not by GMP. In Pseudomonas fluorescens (strain Pf0-1), this protein is Peptide chain release factor 3.